The primary structure comprises 289 residues: Acetyl-coenzyme A carboxylase carboxyl transferase subunit beta (289 aa).

Positions 28-289 constitute a CoA carboxyltransferase N-terminal domain; it reads VMTKCPKCKK…QGGGMAVWQS (262 aa). C32, C35, C51, and C54 together coordinate Zn(2+). The C4-type zinc finger occupies 32–54; the sequence is CPKCKKIMYTKELLKNLKVCVNC.

This sequence belongs to the AccD/PCCB family. As to quaternary structure, acetyl-CoA carboxylase is a heterohexamer composed of biotin carboxyl carrier protein (AccB), biotin carboxylase (AccC) and two subunits each of ACCase subunit alpha (AccA) and ACCase subunit beta (AccD). Zn(2+) is required as a cofactor.

It localises to the cytoplasm. It carries out the reaction N(6)-carboxybiotinyl-L-lysyl-[protein] + acetyl-CoA = N(6)-biotinyl-L-lysyl-[protein] + malonyl-CoA. It functions in the pathway lipid metabolism; malonyl-CoA biosynthesis; malonyl-CoA from acetyl-CoA: step 1/1. In terms of biological role, component of the acetyl coenzyme A carboxylase (ACC) complex. Biotin carboxylase (BC) catalyzes the carboxylation of biotin on its carrier protein (BCCP) and then the CO(2) group is transferred by the transcarboxylase to acetyl-CoA to form malonyl-CoA. The sequence is that of Acetyl-coenzyme A carboxylase carboxyl transferase subunit beta from Bacillus mycoides (strain KBAB4) (Bacillus weihenstephanensis).